The following is a 243-amino-acid chain: VQ motif-containing protein 33 (243 aa).

The span at 1 to 16 (MEVSTSSMSSKPEQMQ) shows a compositional bias: polar residues. The segment at 1 to 49 (MEVSTSSMSSKPEQMQNPPPMISSPRFQPQIISPHHHDQHQHLSNPYPT) is disordered. The short motif at 59-68 (FKQVVQMLTG) is the VQ element. Disordered stretches follow at residues 69–98 (SSTD…SIPP) and 138–162 (FTGG…SENI). 2 positions are modified to phosphoserine: S83 and S95. Positions 84–98 (PVNNNNKGSSFSIPP) are enriched in polar residues. A Phosphothreonine modification is found at T139. A phosphoserine mark is found at S148, S152, S165, S167, and S178. Residues 149-162 (PRFSPRNSSSSENI) are compositionally biased toward low complexity. Residues 180 to 243 (VTPLRSNDDP…FPVASPARNS (64 aa)) form a disordered region. At T181 the chain carries Phosphothreonine. Polar residues predominate over residues 191–201 (NKSSPLSLGNS). A phosphoserine mark is found at S218 and S221. Residue T222 is modified to Phosphothreonine. Residue S238 is modified to Phosphoserine.

Post-translationally, phosphorylated on serine and threonine residues by MPK6.

It localises to the nucleus. Its function is as follows. May modulate WRKY transcription factor activities. The chain is VQ motif-containing protein 33 from Arabidopsis thaliana (Mouse-ear cress).